Here is a 122-residue protein sequence, read N- to C-terminus: Small ribosomal subunit protein uS13 (122 aa).

Positions 97-122 (PVRGQKTKSNARTRKGPRPSRIKKKK) are disordered. Residues 101–122 (QKTKSNARTRKGPRPSRIKKKK) show a composition bias toward basic residues.

The protein belongs to the universal ribosomal protein uS13 family. In terms of assembly, part of the 30S ribosomal subunit. Forms a loose heterodimer with protein S19. Forms two bridges to the 50S subunit in the 70S ribosome.

In terms of biological role, located at the top of the head of the 30S subunit, it contacts several helices of the 16S rRNA. In the 70S ribosome it contacts the 23S rRNA (bridge B1a) and protein L5 of the 50S subunit (bridge B1b), connecting the 2 subunits; these bridges are implicated in subunit movement. Contacts the tRNAs in the A and P-sites. The protein is Small ribosomal subunit protein uS13 of Thermosipho melanesiensis (strain DSM 12029 / CIP 104789 / BI429).